We begin with the raw amino-acid sequence, 232 residues long: Large ribosomal subunit protein uL1 (232 aa).

The protein belongs to the universal ribosomal protein uL1 family. As to quaternary structure, part of the 50S ribosomal subunit.

Its function is as follows. Binds directly to 23S rRNA. The L1 stalk is quite mobile in the ribosome, and is involved in E site tRNA release. Functionally, protein L1 is also a translational repressor protein, it controls the translation of the L11 operon by binding to its mRNA. This Liberibacter asiaticus (Citrus greening disease) protein is Large ribosomal subunit protein uL1.